The chain runs to 322 residues: MSSLGGGSQDAGGSSSSSTNGSGGSGSSGPKAGAADKSAVVAAAAPASVADDTPPPERRNKSGIISEPLNKSLRRSRPLSHYSSFGSSGGSGGGSMMGGESADKATAAAAAASLLANGHDLAAAMAVDKSNPTSKHKSGAVASLLSKAERATELAAEGQLTLQQFAQSTEMLKRVVQEHLPLMSEAGAGLPDMEAVAGAEALNGQSDFPYLGAFPINPGLFIMTPAGVFLAESALHMAGLAEYPMQGELASAISSGKKKRKRCGMCAPCRRRINCEQCSSCRNRKTGHQICKFRKCEELKKKPSAALEKVMLPTGAAFRWFQ.

Residues Met1–Asp10 are compositionally biased toward gly residues. Positions Met1–Glu100 are disordered. Composition is skewed to low complexity over residues Ala11–Asn20 and Ser28–Asp52. Position 53 is a phosphothreonine (Thr53). Residues Ser87–Met97 show a composition bias toward gly residues. A CXXC-type zinc finger spans residues Gly256–Glu297. The Nuclear localization signal motif lies at Lys257–Arg262. Residues Cys263, Cys266, Cys269, Cys275, Cys278, Cys281, Cys291, and Cys296 each coordinate Zn(2+).

As to quaternary structure, interacts with DVL1. Interacts with RBPJ.

It is found in the nucleus. The protein localises to the cytoplasm. Its function is as follows. May indirectly participate in activation of the NF-kappa-B and MAPK pathways. Acts as a mediator of BMP4-mediated modulation of canonical Wnt signaling activity in neural stem cells. Required for DNA damage-induced ATM phosphorylation, p53 activation and cell cycle arrest. Involved in myelopoiesis. Transcription factor. Binds to the oxygen responsive element of COX4I2 and represses its transcription under hypoxia conditions (4% oxygen), as well as normoxia conditions (20% oxygen). May repress COX4I2 transactivation induced by CHCHD2 and RBPJ. Binds preferentially to DNA containing cytidine-phosphate-guanosine (CpG) dinucleotides over CpH (H=A, T, and C), hemimethylated-CpG and hemimethylated-hydroxymethyl-CpG. In Homo sapiens (Human), this protein is CXXC-type zinc finger protein 5 (CXXC5).